Here is a 354-residue protein sequence, read N- to C-terminus: Uroporphyrinogen decarboxylase (354 aa).

Residues 27-31 (RQAGR), Asp-77, Tyr-154, Thr-209, and His-327 each bind substrate.

This sequence belongs to the uroporphyrinogen decarboxylase family. Homodimer.

It localises to the cytoplasm. The enzyme catalyses uroporphyrinogen III + 4 H(+) = coproporphyrinogen III + 4 CO2. It functions in the pathway porphyrin-containing compound metabolism; protoporphyrin-IX biosynthesis; coproporphyrinogen-III from 5-aminolevulinate: step 4/4. Its function is as follows. Catalyzes the decarboxylation of four acetate groups of uroporphyrinogen-III to yield coproporphyrinogen-III. The polypeptide is Uroporphyrinogen decarboxylase (Klebsiella pneumoniae (strain 342)).